The sequence spans 632 residues: Asparagine synthetase [glutamine-hydrolyzing] 1 (632 aa).

Cysteine 2 acts as the For GATase activity in catalysis. Positions 2–214 (CGFVGVFNKH…PGSQFTIRPD (213 aa)) constitute a Glutamine amidotransferase type-2 domain. L-glutamine contacts are provided by residues 52–56 (RLSII), 77–79 (NGE), and aspartate 102. Residues valine 288 and 361–362 (SG) each bind ATP.

It belongs to the asparagine synthetase family.

The enzyme catalyses L-aspartate + L-glutamine + ATP + H2O = L-asparagine + L-glutamate + AMP + diphosphate + H(+). Its pathway is amino-acid biosynthesis; L-asparagine biosynthesis; L-asparagine from L-aspartate (L-Gln route): step 1/1. Functionally, main asparagine synthetase in vegetative cells. The chain is Asparagine synthetase [glutamine-hydrolyzing] 1 (asnB) from Bacillus subtilis (strain 168).